The following is a 187-amino-acid chain: Peptide methionine sulfoxide reductase A2-1 (187 aa).

It belongs to the MsrA Met sulfoxide reductase family.

Its subcellular location is the cytoplasm. It localises to the cytosol. It carries out the reaction L-methionyl-[protein] + [thioredoxin]-disulfide + H2O = L-methionyl-(S)-S-oxide-[protein] + [thioredoxin]-dithiol. It catalyses the reaction [thioredoxin]-disulfide + L-methionine + H2O = L-methionine (S)-S-oxide + [thioredoxin]-dithiol. Functionally, catalyzes the reduction of methionine sulfoxide (MetSO) to methionine in proteins. Plays a protective role against oxidative stress by restoring activity to proteins that have been inactivated by methionine oxidation. MSRA family specifically reduces the MetSO S-enantiomer. This Oryza sativa subsp. japonica (Rice) protein is Peptide methionine sulfoxide reductase A2-1 (MSRA2-1).